The following is a 1043-amino-acid chain: Desmoglein-1 (1043 aa).

A signal peptide spans 1–23 (MNWPFFRAAVVLFIFLVVLEVNS). The propeptide occupies 24–49 (DFRIQVRDYNTKNGTIKWHSLRRQKR). 4 consecutive Cadherin domains span residues 50-158 (EWIK…PVFS), 159-270 (MSTF…PYME), 271-385 (LPTQ…GSVF), and 386-498 (RPGS…VNGS). Residues 50–551 (EWIKFAAACR…PLRDNVHFGP (502 aa)) are Extracellular-facing. N110 and N180 each carry an N-linked (GlcNAc...) asparagine glycan. N496 carries N-linked (GlcNAc...) asparagine glycosylation. The chain crosses the membrane as a helical span at residues 552 to 572 (AGIGLLIMGFLVLGLVPFLLM). Over 573–1043 (CCDCGGAPGG…TKYSTVQYTK (471 aa)) the chain is Cytoplasmic. The segment at 770–807 (DVEPFPDSDPSWPPKSTEPVCPPQGTEPTGGGHPPISP) is disordered. 5 Desmoglein repeat repeats span residues 819-845 (TYPS…TVTE), 846-875 (SYTS…ERVV), 876-905 (GPIS…ERVI), 906-933 (APSS…ERVI), and 934-962 (QPTS…ERVV).

As to quaternary structure, binds to JUP/plakoglobin. Interacts with PKP2. Interacts with DSC3; there is evidence to suggest that the interaction promotes cell-cell adhesion of keratinocytes. Expressed in the epidermis. Expressed in the muzzle epithelium.

It localises to the cell membrane. The protein localises to the cell junction. Its subcellular location is the desmosome. It is found in the cytoplasm. The protein resides in the nucleus. Its function is as follows. Component of intercellular desmosome junctions. Involved in the interaction of plaque proteins and intermediate filaments mediating cell-cell adhesion. The polypeptide is Desmoglein-1 (DSG1) (Bos taurus (Bovine)).